We begin with the raw amino-acid sequence, 333 residues long: Global transcription regulator sge1 (333 aa).

2 disordered regions span residues 93-139 (PPGE…PSVP) and 241-307 (QHQS…PQYQ).

This sequence belongs to the MIT1/WOR1 family.

The protein resides in the nucleus. Functionally, global transcriptional regulator that acts as an activator of secondary metabolism. Required for expression of a yet uncharacterized secondary metabolism gene cluster containing a non-canonical non-ribosomal peptide synthetase. Not required for conidiogenesis nor for pathogenicity, but is involved in vegetative growth. In Gibberella fujikuroi (strain CBS 195.34 / IMI 58289 / NRRL A-6831) (Bakanae and foot rot disease fungus), this protein is Global transcription regulator sge1.